Consider the following 351-residue polypeptide: Photosystem II D2 protein (351 aa).

Residues 39-59 (TAYLAIGGWLTGTTFVTSWYT) traverse the membrane as a helical segment. Histidine 116 lines the chlorophyll a pocket. The helical transmembrane segment at 123 to 139 (GFMLRQFEIARLVGIRP) threads the bilayer. 2 residues coordinate pheophytin a: glutamine 128 and asparagine 141. A helical membrane pass occupies residues 151–164 (VFVSVFLMYPLGQS). Histidine 196 contacts chlorophyll a. The chain crosses the membrane as a helical span at residues 206-226 (GALLCAIHGATVENTLFEDGE). 2 residues coordinate a plastoquinone: histidine 213 and phenylalanine 260. Histidine 213 contacts Fe cation. Histidine 267 serves as a coordination point for Fe cation. A helical membrane pass occupies residues 277–293 (GLWTSSIGIIGLALNLR).

The protein belongs to the reaction center PufL/M/PsbA/D family. In terms of assembly, PSII is composed of 1 copy each of membrane proteins PsbA, PsbB, PsbC, PsbD, PsbE, PsbF, PsbH, PsbI, PsbJ, PsbK, PsbL, PsbM, PsbT, PsbX, PsbY, PsbZ, Psb30/Ycf12, peripheral proteins PsbO, CyanoQ (PsbQ), PsbU, PsbV and a large number of cofactors. It forms dimeric complexes. The D1/D2 heterodimer binds P680, chlorophylls that are the primary electron donor of PSII, and subsequent electron acceptors. It shares a non-heme iron and each subunit binds pheophytin, quinone, additional chlorophylls, carotenoids and lipids. There is also a Cl(-1) ion associated with D1 and D2, which is required for oxygen evolution. The PSII complex binds additional chlorophylls, carotenoids and specific lipids. serves as cofactor.

It localises to the cellular thylakoid membrane. It catalyses the reaction 2 a plastoquinone + 4 hnu + 2 H2O = 2 a plastoquinol + O2. In terms of biological role, photosystem II (PSII) is a light-driven water:plastoquinone oxidoreductase that uses light energy to abstract electrons from H(2)O, generating O(2) and a proton gradient subsequently used for ATP formation. It consists of a core antenna complex that captures photons, and an electron transfer chain that converts photonic excitation into a charge separation. The D1/D2 (PsbA/PsbD) reaction center heterodimer binds P680, the primary electron donor of PSII as well as several subsequent electron acceptors. D2 is needed for assembly of a stable PSII complex. The polypeptide is Photosystem II D2 protein (Parasynechococcus marenigrum (strain WH8102)).